The sequence spans 427 residues: Mitochondrial distribution and morphology protein 10 (427 aa).

The span at 393–414 shows a compositional bias: low complexity; that stretch reads SSYANSQATAGAQGSSGGPPTS. The tract at residues 393-427 is disordered; that stretch reads SSYANSQATAGAQGSSGGPPTSYWRGVGVSVSYSS.

It belongs to the MDM10 family. As to quaternary structure, component of the ER-mitochondria encounter structure (ERMES) or MDM complex, composed of mmm1, mdm10, mdm12 and mdm34. Associates with the mitochondrial outer membrane sorting assembly machinery SAM(core) complex.

It localises to the mitochondrion outer membrane. Component of the ERMES/MDM complex, which serves as a molecular tether to connect the endoplasmic reticulum and mitochondria. Components of this complex are involved in the control of mitochondrial shape and protein biogenesis and may function in phospholipid exchange. mdm10 is involved in the late assembly steps of the general translocase of the mitochondrial outer membrane (TOM complex). Functions in the tom40-specific route of the assembly of outer membrane beta-barrel proteins, including the association of tom40 with the receptor tom22 and small TOM proteins. Can associate with the SAM(core) complex as well as the mdm12-mmm1 complex, both involved in late steps of the major beta-barrel assembly pathway, that is responsible for biogenesis of all outer membrane beta-barrel proteins. May act as a switch that shuttles between both complexes and channels precursor proteins into the tom40-specific pathway. Plays a role in mitochondrial morphology and in the inheritance of mitochondria. The chain is Mitochondrial distribution and morphology protein 10 (mdmB) from Emericella nidulans (strain FGSC A4 / ATCC 38163 / CBS 112.46 / NRRL 194 / M139) (Aspergillus nidulans).